The primary structure comprises 382 residues: 1-deoxy-D-xylulose 5-phosphate reductoisomerase (382 aa).

The NADPH site is built by T10, G11, S12, I13, G36, and N122. A 1-deoxy-D-xylulose 5-phosphate-binding site is contributed by K123. E124 lines the NADPH pocket. D148 lines the Mn(2+) pocket. Residues S149, E150, S174, and H197 each contribute to the 1-deoxy-D-xylulose 5-phosphate site. E150 lines the Mn(2+) pocket. An NADPH-binding site is contributed by G203. Residues S210, N215, K216, and E219 each contribute to the 1-deoxy-D-xylulose 5-phosphate site. E219 is a Mn(2+) binding site.

It belongs to the DXR family. Mg(2+) serves as cofactor. The cofactor is Mn(2+).

The catalysed reaction is 2-C-methyl-D-erythritol 4-phosphate + NADP(+) = 1-deoxy-D-xylulose 5-phosphate + NADPH + H(+). It participates in isoprenoid biosynthesis; isopentenyl diphosphate biosynthesis via DXP pathway; isopentenyl diphosphate from 1-deoxy-D-xylulose 5-phosphate: step 1/6. Catalyzes the NADPH-dependent rearrangement and reduction of 1-deoxy-D-xylulose-5-phosphate (DXP) to 2-C-methyl-D-erythritol 4-phosphate (MEP). The protein is 1-deoxy-D-xylulose 5-phosphate reductoisomerase of Chlorobium phaeobacteroides (strain BS1).